The primary structure comprises 365 residues: Phosphatidylcholine:ceramide cholinephosphotransferase 2 (365 aa).

A disordered region spans residues 9-50 (LEGHLESQTNNSTNTYTSPTEAVEEEDKNGKGKPKTLSNGLR). Residues 15–28 (SQTNNSTNTYTSPT) are compositionally biased toward low complexity. Helical transmembrane passes span 80–100 (GIAF…ITVV), 128–148 (FSVS…QWLF), 159–179 (FFFI…VTTL), 219–239 (ILCG…TYLF), and 248–268 (FWWY…CILV). The active site involves histidine 229. Catalysis depends on residues histidine 272 and aspartate 276. A helical transmembrane segment spans residues 273–290 (YTVDVIIAYYITTRLFWW). At 291–365 (YHSMANEKNL…KIGEDNEKST (75 aa)) the chain is on the cytoplasmic side. 4 S-palmitoyl cysteine lipidation sites follow: cysteine 331, cysteine 332, cysteine 343, and cysteine 348.

This sequence belongs to the sphingomyelin synthase family. Post-translationally, palmitoylated on Cys-331, Cys-332, Cys-343 and Cys-348; which plays an important role in plasma membrane localization. In terms of tissue distribution, expression restricted to late round spermatids and elongating spermatids but not detected in late elongate spermatids and Sertoli cells (at protein level).

Its subcellular location is the cell membrane. The protein localises to the golgi apparatus membrane. The catalysed reaction is an N-acylsphing-4-enine + a 1,2-diacyl-sn-glycero-3-phosphocholine = a sphingomyelin + a 1,2-diacyl-sn-glycerol. It carries out the reaction an N-acylsphinganine + a 1,2-diacyl-sn-glycero-3-phosphocholine = an N-acylsphinganine-1-phosphocholine + a 1,2-diacyl-sn-glycerol. The enzyme catalyses an N-acyl-(4R)-4-hydroxysphinganine + a 1,2-diacyl-sn-glycero-3-phosphocholine = an N-acyl-(4R)-4-hydroxysphinganine-phosphocholine + a 1,2-diacyl-sn-glycerol. It catalyses the reaction an N-acylsphing-4-enine + a 1,2-diacyl-sn-glycero-3-phosphoethanolamine = an N-acylsphing-4-enine 1-phosphoethanolamine + a 1,2-diacyl-sn-glycerol. The catalysed reaction is an N-acylsphinganine + a 1,2-diacyl-sn-glycero-3-phosphoethanolamine = an N-acylsphinganine-1-phosphoethanolamine + a 1,2-diacyl-sn-glycerol. It carries out the reaction an N-acyl-(4R)-4-hydroxysphinganine + a 1,2-diacyl-sn-glycero-3-phosphoethanolamine = an N-acyl-(4R)-4-hydroxysphinganine-1-phosphoethanolamine + a 1,2-diacyl-sn-glycerol. The enzyme catalyses 1,2-dihexadecanoyl-sn-glycero-3-phosphocholine + an N-acylsphing-4-enine = 1,2-dihexadecanoyl-sn-glycerol + a sphingomyelin. It catalyses the reaction 1-(9Z-octadecenoyl)-2-acyl-sn-3-glycerol + a sphingomyelin = a 1-(9Z-octadecenoyl)-2-acyl-sn-glycero-3-phosphocholine + an N-acylsphing-4-enine. The catalysed reaction is N-hexadecanoylsphinganine + a 1,2-diacyl-sn-glycero-3-phosphocholine = N-hexadecanoyl-sphinganine-1-phosphocholine + a 1,2-diacyl-sn-glycerol. It carries out the reaction N-hexadecanoyl-(4R)-hydroxysphinganine + a 1,2-diacyl-sn-glycero-3-phosphocholine = N-hexadecanoyl-(4R)-hydroxysphinganine-phosphocholine + a 1,2-diacyl-sn-glycerol. The enzyme catalyses N-hexadecanoylsphinganine + a 1,2-diacyl-sn-glycero-3-phosphoethanolamine = N-hexadecanoyl-sphinganine-1-phosphoethanolamine + a 1,2-diacyl-sn-glycerol. It catalyses the reaction N-hexadecanoyl-(4R)-hydroxysphinganine + a 1,2-diacyl-sn-glycero-3-phosphoethanolamine = N-hexadecanoyl-(4R)-hydroxysphinganine-1-phosphoethanolamine + a 1,2-diacyl-sn-glycerol. It participates in sphingolipid metabolism. Its function is as follows. Sphingomyelin synthase that primarily contributes to sphingomyelin synthesis and homeostasis at the plasma membrane. Catalyzes the reversible transfer of phosphocholine moiety in sphingomyelin biosynthesis: in the forward reaction transfers phosphocholine head group of phosphatidylcholine (PC) on to ceramide (CER) to form ceramide phosphocholine (sphingomyelin, SM) and diacylglycerol (DAG) as by-product, and in the reverse reaction transfers phosphocholine from SM to DAG to form PC and CER. The direction of the reaction appears to depend on the levels of CER and DAG in the plasma membrane. Does not use free phosphorylcholine or CDP-choline as donors. Can also transfer phosphoethanolamine head group of phosphatidylethanolamine (PE) on to ceramide (CER) to form ceramide phosphoethanolamine (CPE). Regulates receptor-mediated signal transduction via mitogenic DAG and proapoptotic CER, as well as via SM, a structural component of membrane rafts that serve as platforms for signal transduction and protein sorting. To a lesser extent, plays a role in secretory transport via regulation of DAG pool at the Golgi apparatus and its downstream effects on PRKD1. Required for normal bone matrix mineralization. In Rattus norvegicus (Rat), this protein is Phosphatidylcholine:ceramide cholinephosphotransferase 2 (Sgms2).